Reading from the N-terminus, the 477-residue chain is Ribulose bisphosphate carboxylase large chain (477 aa).

Positions 1 to 2 (MS) are excised as a propeptide. Pro-3 is subject to N-acetylproline. Lys-14 bears the N6,N6,N6-trimethyllysine mark. Residues Asn-123 and Thr-173 each coordinate substrate. Residue Lys-175 is the Proton acceptor of the active site. Residue Lys-177 coordinates substrate. Lys-201, Asp-203, and Glu-204 together coordinate Mg(2+). Lys-201 carries the post-translational modification N6-carboxylysine. His-294 (proton acceptor) is an active-site residue. Substrate is bound by residues Arg-295, His-327, and Ser-379.

The protein belongs to the RuBisCO large chain family. Type I subfamily. As to quaternary structure, heterohexadecamer of 8 large chains and 8 small chains; disulfide-linked. The disulfide link is formed within the large subunit homodimers. It depends on Mg(2+) as a cofactor. The disulfide bond which can form in the large chain dimeric partners within the hexadecamer appears to be associated with oxidative stress and protein turnover.

It localises to the plastid. It is found in the chloroplast. The catalysed reaction is 2 (2R)-3-phosphoglycerate + 2 H(+) = D-ribulose 1,5-bisphosphate + CO2 + H2O. It carries out the reaction D-ribulose 1,5-bisphosphate + O2 = 2-phosphoglycolate + (2R)-3-phosphoglycerate + 2 H(+). RuBisCO catalyzes two reactions: the carboxylation of D-ribulose 1,5-bisphosphate, the primary event in carbon dioxide fixation, as well as the oxidative fragmentation of the pentose substrate in the photorespiration process. Both reactions occur simultaneously and in competition at the same active site. The polypeptide is Ribulose bisphosphate carboxylase large chain (Nicotiana debneyi (Debney's tobacco)).